A 215-amino-acid polypeptide reads, in one-letter code: MSKVYDWFEERLEIQAIAEDVSSKYVPPHVNIFYCLGGITLTCFLIQFATGFAMTFYYKPTVAEAYSSVQFIMNQVNFGWLIRSIHRWSASMMVLMMILHVFRVYLTGGFKRPRELTWVTGVVMAVITVTFGVTGYSLPWDQVGYWAVKIVSGVPEAIPVVGSAMVELLRGGQSVGQATLTRFYSLHTFVLPWLIAVFMLLHFLMIRKQGISGPL.

A helical membrane pass occupies residues 32-52 (IFYCLGGITLTCFLIQFATGF). Cysteine 35 serves as a coordination point for heme c. Residues histidine 86 and histidine 100 each coordinate heme b. 3 consecutive transmembrane segments (helical) span residues 90 to 110 (ASMM…TGGF), 116 to 136 (LTWV…VTGY), and 186 to 206 (LHTF…FLMI). Heme b contacts are provided by histidine 187 and histidine 202.

The protein belongs to the cytochrome b family. PetB subfamily. As to quaternary structure, the 4 large subunits of the cytochrome b6-f complex are cytochrome b6, subunit IV (17 kDa polypeptide, PetD), cytochrome f and the Rieske protein, while the 4 small subunits are PetG, PetL, PetM and PetN. The complex functions as a dimer. The cofactor is heme b. Heme c serves as cofactor.

The protein resides in the cellular thylakoid membrane. In terms of biological role, component of the cytochrome b6-f complex, which mediates electron transfer between photosystem II (PSII) and photosystem I (PSI), cyclic electron flow around PSI, and state transitions. The polypeptide is Cytochrome b6 (Synechococcus elongatus (strain ATCC 33912 / PCC 7942 / FACHB-805) (Anacystis nidulans R2)).